Reading from the N-terminus, the 64-residue chain is Large ribosomal subunit protein bL28 (64 aa).

The protein belongs to the bacterial ribosomal protein bL28 family.

This is Large ribosomal subunit protein bL28 from Mycoplasmoides gallisepticum (strain R(low / passage 15 / clone 2)) (Mycoplasma gallisepticum).